Here is a 404-residue protein sequence, read N- to C-terminus: Glucose-1-phosphate adenylyltransferase 2 (404 aa).

Alpha-D-glucose 1-phosphate is bound by residues tyrosine 97, glycine 162, 177–178 (EK), and serine 195.

It belongs to the bacterial/plant glucose-1-phosphate adenylyltransferase family. As to quaternary structure, homotetramer.

It catalyses the reaction alpha-D-glucose 1-phosphate + ATP + H(+) = ADP-alpha-D-glucose + diphosphate. It participates in glycan biosynthesis; glycogen biosynthesis. Functionally, involved in the biosynthesis of ADP-glucose, a building block required for the elongation reactions to produce glycogen. Catalyzes the reaction between ATP and alpha-D-glucose 1-phosphate (G1P) to produce pyrophosphate and ADP-Glc. In Vibrio vulnificus (strain YJ016), this protein is Glucose-1-phosphate adenylyltransferase 2.